An 86-amino-acid chain; its full sequence is Serine protease inhibitor Kazal-type 2 (86 aa).

A signal peptide spans 1 to 16 (MLRLVLLLLATDFAAS). A Kazal-like domain is found at 32–86 (QFRTPDCHRFDYPVCSKHLSPVCGTDMNTYGNECTLCMKIREDGSHINIIKDEPC). Disulfide bonds link C38–C68, C46–C65, and C54–C86.

The protein resides in the secreted. It is found in the cytoplasmic vesicle. The protein localises to the secretory vesicle. Its subcellular location is the acrosome. Its function is as follows. As a strong inhibitor of acrosin, it is required for normal spermiogenesis. It probably hinders premature activation of proacrosin and other proteases, thus preventing the cascade of events leading to spermiogenesis defects. May be involved in the regulation of serine protease-dependent germ cell apoptosis. It also inhibits trypsin. The chain is Serine protease inhibitor Kazal-type 2 (Spink2) from Rattus norvegicus (Rat).